We begin with the raw amino-acid sequence, 503 residues long: MAGQRVRTRFAPSPTGYLHVGGLRTALYNYLFAKRMNGEFVIRIEDTDQSRKVEDAEKNLISTLEWAGIIADESPMHGGNYGPYVQSQRLDIYKKYCQQLLDDKNAYYCFSTSEELEENRQLQLKQGLQPKYNRKWLPEDMGGSMPQSEIKKKLDEGVPYVVRMKVPDYVSVWFEDVIRGPIEFDSATIDDQVLMKSDGFPTYHFASVIDDHLMEFTHIIRGEEWLPSMPKHLLLYEFFGWEPPKFAHLPLLLNPDRSKLSKRQGDVAVEDYVRKGYSSEAIVNFVALLGWNEGEGSEQEVFSMDELIEKFSLERVGKAGAVFNVDKLSWLEKQYIKTRPVDVIVEGIKPVLNEALAQRSPEMSVEWITSDDYLAKVVDLMRERVNFEHEFVTFSSYFFFEPESYEEDAVAKRWRPDMPELLGEFSKLLEANDDFTAENIEAELKAFVAPKGLKPAVIIHPLRLVVSGVSFGPSLYHMLEVLGKETVLRRIARGIERISIPEA.

Positions 12–22 (PSPTGYLHVGG) match the 'HIGH' region motif. The 'KMSKS' region signature appears at 259 to 263 (KLSKR). Lys-262 contributes to the ATP binding site.

This sequence belongs to the class-I aminoacyl-tRNA synthetase family. Glutamate--tRNA ligase type 1 subfamily. In terms of assembly, monomer.

It localises to the cytoplasm. The catalysed reaction is tRNA(Glu) + L-glutamate + ATP = L-glutamyl-tRNA(Glu) + AMP + diphosphate. Its function is as follows. Catalyzes the attachment of glutamate to tRNA(Glu) in a two-step reaction: glutamate is first activated by ATP to form Glu-AMP and then transferred to the acceptor end of tRNA(Glu). The polypeptide is Glutamate--tRNA ligase (Chlorobaculum parvum (strain DSM 263 / NCIMB 8327) (Chlorobium vibrioforme subsp. thiosulfatophilum)).